A 134-amino-acid polypeptide reads, in one-letter code: Profilin-2 (134 aa).

Residues Cys-13 and Cys-118 are joined by a disulfide bond. Positions 84-100 (AVIRGKKGSGGITIKKT) match the Involved in PIP2 interaction motif. A Phosphothreonine modification is found at Thr-114.

Belongs to the profilin family. In terms of assembly, occurs in many kinds of cells as a complex with monomeric actin in a 1:1 ratio. Phosphorylated by MAP kinases.

The protein resides in the cytoplasm. It localises to the cytoskeleton. In terms of biological role, binds to actin and affects the structure of the cytoskeleton. At high concentrations, profilin prevents the polymerization of actin, whereas it enhances it at low concentrations. This chain is Profilin-2, found in Olea europaea (Common olive).